The primary structure comprises 935 residues: Protein translocase subunit SecA (935 aa).

Residues Gln-90, 108–112 (GEGKT), and Asp-504 each bind ATP.

The protein belongs to the SecA family. In terms of assembly, monomer and homodimer. Part of the essential Sec protein translocation apparatus which comprises SecA, SecYEG and auxiliary proteins SecDF. Other proteins may also be involved.

It localises to the cell inner membrane. Its subcellular location is the cellular thylakoid membrane. It is found in the cytoplasm. The catalysed reaction is ATP + H2O + cellular proteinSide 1 = ADP + phosphate + cellular proteinSide 2.. Part of the Sec protein translocase complex. Interacts with the SecYEG preprotein conducting channel. Has a central role in coupling the hydrolysis of ATP to the transfer of proteins into and across the cell membrane, serving as an ATP-driven molecular motor driving the stepwise translocation of polypeptide chains across the membrane. Functionally, probably participates in protein translocation into and across both the cytoplasmic and thylakoid membranes in cyanobacterial cells. In Gloeothece citriformis (strain PCC 7424) (Cyanothece sp. (strain PCC 7424)), this protein is Protein translocase subunit SecA.